We begin with the raw amino-acid sequence, 263 residues long: Benzil reductase ((S)-benzoin forming) IRC24 (263 aa).

The NADP(+) site is built by Ile-7 and Asn-86. Ser-143 (proton donor) is an active-site residue. NADP(+) contacts are provided by Tyr-157, Lys-161, Val-190, and Thr-192. Tyr-157 serves as the catalytic Proton acceptor. Lys-161 acts as the Lowers pKa of active site Tyr in catalysis.

Belongs to the short-chain dehydrogenases/reductases (SDR) family.

The catalysed reaction is (S)-benzoin + NADP(+) = benzil + NADPH + H(+). It carries out the reaction 2-hydroxy-1-phenyl-1-propanone + NADP(+) = 1-phenyl-1,2-propanedione + NADPH + H(+). Functionally, reduces benzil stereospecifically to (S)-benzoin. Also reduces 1-phenyl-1,2-propanedione to 2-hydroxy-1-phenyl-1-propanone. Is probably involved in a pathway contributing to genomic integrity. The chain is Benzil reductase ((S)-benzoin forming) IRC24 (IRC24) from Saccharomyces cerevisiae (strain ATCC 204508 / S288c) (Baker's yeast).